The following is a 209-amino-acid chain: Glutathione S-transferase 1, isoform D (209 aa).

Residues Met1 to Asp80 enclose the GST N-terminal domain. Residues Ser9, His50–Ile52, and Glu64–Arg66 contribute to the glutathione site. In terms of domain architecture, GST C-terminal spans Asp86–Phe207.

Belongs to the GST superfamily. Theta family. In terms of assembly, homodimer.

The catalysed reaction is RX + glutathione = an S-substituted glutathione + a halide anion + H(+). It carries out the reaction 1,1,1-trichloro-2,2-bis(4-chlorophenyl)ethane = 1,1-dichloro-2,2-bis(4-chlorophenyl)ethylene + chloride + H(+). With respect to regulation, inhibited by S-hexylglutathione. Its function is as follows. Conjugation of reduced glutathione to a wide number of exogenous and endogenous hydrophobic electrophiles. Has DDT dehydrochlorinase activity. The protein is Glutathione S-transferase 1, isoform D (GstD1) of Anopheles gambiae (African malaria mosquito).